The following is a 174-amino-acid chain: F-box protein At1g70360 (174 aa).

One can recognise an F-box domain in the interval 136-174; it reads PPCFISLPRELKHKILESLPGVDIGTLACVSSELRDMAS.

This chain is F-box protein At1g70360, found in Arabidopsis thaliana (Mouse-ear cress).